A 96-amino-acid polypeptide reads, in one-letter code: Large ribosomal subunit protein bL21 (96 aa).

Belongs to the bacterial ribosomal protein bL21 family. Part of the 50S ribosomal subunit. Contacts protein L20.

In terms of biological role, this protein binds to 23S rRNA in the presence of protein L20. This Hydrogenobaculum sp. (strain Y04AAS1) protein is Large ribosomal subunit protein bL21.